A 311-amino-acid polypeptide reads, in one-letter code: Elongation factor Ts (311 aa).

Residues Thr81–Val84 form an involved in Mg(2+) ion dislocation from EF-Tu region.

It belongs to the EF-Ts family.

It is found in the cytoplasm. Its function is as follows. Associates with the EF-Tu.GDP complex and induces the exchange of GDP to GTP. It remains bound to the aminoacyl-tRNA.EF-Tu.GTP complex up to the GTP hydrolysis stage on the ribosome. The polypeptide is Elongation factor Ts (Trichlorobacter lovleyi (strain ATCC BAA-1151 / DSM 17278 / SZ) (Geobacter lovleyi)).